We begin with the raw amino-acid sequence, 68 residues long: Protein SlyX homolog (68 aa).

This sequence belongs to the SlyX family.

This Ectopseudomonas mendocina (strain ymp) (Pseudomonas mendocina) protein is Protein SlyX homolog.